The primary structure comprises 552 residues: Tyrosine-protein kinase Src64B (552 aa).

An SH3 domain is found at 95 to 156 (VLKRVVVALY…PLNFVAEERS (62 aa)). Residues 162–259 (WFFENVLRKE…GLCHILSRPC (98 aa)) form the SH2 domain. Residues 284-537 (IQLLRKLGRG…TFEFLNHYFE (254 aa)) enclose the Protein kinase domain. Residues 290 to 298 (LGRGNFGEV) and K312 each bind ATP. D404 functions as the Proton acceptor in the catalytic mechanism. Residue Y434 is modified to Phosphotyrosine; by autocatalysis.

Belongs to the protein kinase superfamily. Tyr protein kinase family. SRC subfamily. Interacts with hzg. Post-translationally, phosphorylated. As to expression, after the first 8 hours of development, accumulates almost exclusively in neural tissues such as the brain, ventral nerve chord, and eye-antennal disks, and in differentiating smooth muscle.

It carries out the reaction L-tyrosyl-[protein] + ATP = O-phospho-L-tyrosyl-[protein] + ADP + H(+). In terms of biological role, tyrosine-protein kinase that may play a role in the development of neural tissue and smooth muscle. May contribute to tyrosine phosphorylation of Dscam1, a cell surface receptor involved in targeting of growing axons during eye morphogenesis. This Drosophila melanogaster (Fruit fly) protein is Tyrosine-protein kinase Src64B (Src64B).